Consider the following 222-residue polypeptide: Methylthioribulose-1-phosphate dehydratase (222 aa).

The Zn(2+) site is built by H94 and H96.

The protein belongs to the aldolase class II family. MtnB subfamily. The cofactor is Zn(2+).

It carries out the reaction 5-(methylsulfanyl)-D-ribulose 1-phosphate = 5-methylsulfanyl-2,3-dioxopentyl phosphate + H2O. It functions in the pathway amino-acid biosynthesis; L-methionine biosynthesis via salvage pathway; L-methionine from S-methyl-5-thio-alpha-D-ribose 1-phosphate: step 2/6. Its function is as follows. Catalyzes the dehydration of methylthioribulose-1-phosphate (MTRu-1-P) into 2,3-diketo-5-methylthiopentyl-1-phosphate (DK-MTP-1-P). The polypeptide is Methylthioribulose-1-phosphate dehydratase (Yersinia pseudotuberculosis serotype O:1b (strain IP 31758)).